Consider the following 153-residue polypeptide: Probable histone H2A.4 (153 aa).

Positions 1-12 (MDSGTKVKKGAA) are enriched in basic residues. Disordered regions lie at residues 1–30 (MDSG…RSVK) and 129–153 (KSEK…PKKS). Over residues 133–147 (AASTTKTPKSPSKAT) the composition is skewed to low complexity. The SPKK motif signature appears at 149–152 (SPKK).

It belongs to the histone H2A family. As to quaternary structure, the nucleosome is a histone octamer containing two molecules each of H2A, H2B, H3 and H4 assembled in one H3-H4 heterotetramer and two H2A-H2B heterodimers. The octamer wraps approximately 147 bp of DNA. In terms of processing, not ubiquitinated.

The protein resides in the nucleus. Its subcellular location is the chromosome. Core component of nucleosome. Nucleosomes wrap and compact DNA into chromatin, limiting DNA accessibility to the cellular machineries which require DNA as a template. Histones thereby play a central role in transcription regulation, DNA repair, DNA replication and chromosomal stability. DNA accessibility is regulated via a complex set of post-translational modifications of histones, also called histone code, and nucleosome remodeling. The protein is Probable histone H2A.4 of Arabidopsis thaliana (Mouse-ear cress).